Reading from the N-terminus, the 404-residue chain is MTVKTPVYLDYAATTPVDKRVAEKMIPYLTETFGNPASNSHAFGWEAEEAVEKARADIAALINADPKEIVFTSGATESDNLAIKGAANFYKTKGKHLITVKTEHKAVLDTMRELERQGFEVTYLGVQENGLIDLEELKAAIRDDTILISVMWVNNEIGVVQDIPAIGEICRERKIVFHVDAAQACGKVPVDVEAAKIDLLSMSAHKVYGPKGIGALYVRRKPRVRLEAQMHGGGHERGFRSGTLPTHQIVGMGEAFRIAKEELEQDMAHYRKLRDIFLKGIEGIEEVYVNGDLEHRAPNNLNVSFNFVEGESLIMAVKELAVSSGSACTSASLEPSYVLRALGRNDELAHSSLRITFGRMTTEEEVQFAAELIKSKIGKLRELSPLWEMFKDGIDLNSIEWAAH.

Pyridoxal 5'-phosphate-binding positions include 75–76 (AT), N155, Q183, and 203–205 (SAH). At K206 the chain carries N6-(pyridoxal phosphate)lysine. A pyridoxal 5'-phosphate-binding site is contributed by T243. C328 serves as the catalytic Cysteine persulfide intermediate. C328 provides a ligand contact to [2Fe-2S] cluster.

Belongs to the class-V pyridoxal-phosphate-dependent aminotransferase family. NifS/IscS subfamily. In terms of assembly, homodimer. Forms a heterotetramer with IscU, interacts with other sulfur acceptors. It depends on pyridoxal 5'-phosphate as a cofactor.

It is found in the cytoplasm. The enzyme catalyses (sulfur carrier)-H + L-cysteine = (sulfur carrier)-SH + L-alanine. It functions in the pathway cofactor biosynthesis; iron-sulfur cluster biosynthesis. Functionally, master enzyme that delivers sulfur to a number of partners involved in Fe-S cluster assembly, tRNA modification or cofactor biosynthesis. Catalyzes the removal of elemental sulfur atoms from cysteine to produce alanine. Functions as a sulfur delivery protein for Fe-S cluster synthesis onto IscU, an Fe-S scaffold assembly protein, as well as other S acceptor proteins. This is Cysteine desulfurase IscS from Neisseria meningitidis serogroup C (strain 053442).